The following is a 463-amino-acid chain: 4-hydroxybenzoate polyprenyltransferase, mitochondrial (463 aa).

2 disordered regions span residues 28 to 48 and 133 to 152; these read NNNTNNNNNNNGINKYNSTFN and LLDDNNSNSNNNNNSNNNKP. Low complexity predominate over residues 137 to 150; sequence NNSNSNNNNNSNNN. 7 helical membrane passes run 181-201, 206-226, 257-277, 305-325, 330-350, 375-395, and 431-451; these read IGVWLLLYPCCWSISLAAPAG, LKTMLVFGIGAYVMRSAGCVI, LIFLGGQLLASFGLILSSLNY, FVLGLAFNWGALAGYSAIAGS, IVAPLYLAGISWTMVYDTIYA, IILSVFSGLVISGMFLTGIAA, and FISNKNFGLYFLLIIIVSKLL.

The protein belongs to the UbiA prenyltransferase family. Mg(2+) serves as cofactor.

The protein localises to the mitochondrion inner membrane. The enzyme catalyses an all-trans-polyprenyl diphosphate + 4-hydroxybenzoate = a 4-hydroxy-3-(all-trans-polyprenyl)benzoate + diphosphate. The protein operates within cofactor biosynthesis; ubiquinone biosynthesis. Functionally, catalyzes the prenylation of para-hydroxybenzoate (PHB) with an all-trans polyprenyl group. Mediates the second step in the final reaction sequence of coenzyme Q (CoQ) biosynthesis, which is the condensation of the polyisoprenoid side chain with PHB. Its function is as follows. Catalyzes the prenylation of para-hydroxybenzoate (PHB) with an all-trans polyprenyl group. Mediates the second step in the final reaction sequence of coenzyme Q (CoQ) biosynthesis, which is the condensation of the polyisoprenoid side chain with PHB, generating the first membrane-bound Q intermediate. The chain is 4-hydroxybenzoate polyprenyltransferase, mitochondrial from Dictyostelium discoideum (Social amoeba).